The sequence spans 177 residues: MNGGHIQLIIGPMFSGKSTELIRRVRRYQIAQYKCVTIKYSNDNRYGTGLWTHDKNNFEALEATKLCDVLESITDFSVIGIDEGQFFPDIVEFCERMANEGKIVIVAALDGTFQRKPFNNILNLIPLSEMVVKLTAVCMKCFKEASFSKRLGEETEIEIIGGNDMYQSVCRKCYIDS.

11 to 18 (GPMFSGKS) serves as a coordination point for ATP. Glutamate 83 serves as the catalytic Proton acceptor. Phenylalanine 113 contributes to the substrate binding site. Residues cysteine 138 and cysteine 141 each coordinate Zn(2+). 157-161 (IEIIG) is a binding site for substrate. Residues cysteine 170 and cysteine 173 each coordinate Zn(2+).

Belongs to the thymidine kinase family. Homotetramer. Two molecules of substrate bind to each enzyme tetramer.

It catalyses the reaction thymidine + ATP = dTMP + ADP + H(+). In terms of biological role, phosphorylates thymidine and thymidine analogs, such as azidothymidine (AZT). Part of the salvage pathway for pyrimidine deoxyribonucleotide synthesis. The polypeptide is Thymidine kinase (OPG101) (Vaccinia virus (strain Copenhagen) (VACV)).